The following is a 163-amino-acid chain: Acetolactate synthase small subunit (163 aa).

Positions 4 to 79 (ILSVLLENES…VFKVVNLSEQ (76 aa)) constitute an ACT domain.

It belongs to the acetolactate synthase small subunit family. As to quaternary structure, dimer of large and small chains.

The enzyme catalyses 2 pyruvate + H(+) = (2S)-2-acetolactate + CO2. The protein operates within amino-acid biosynthesis; L-isoleucine biosynthesis; L-isoleucine from 2-oxobutanoate: step 1/4. Its pathway is amino-acid biosynthesis; L-valine biosynthesis; L-valine from pyruvate: step 1/4. The protein is Acetolactate synthase small subunit (ilvH) of Haemophilus influenzae (strain ATCC 51907 / DSM 11121 / KW20 / Rd).